A 930-amino-acid polypeptide reads, in one-letter code: Polypeptide N-acetylgalactosaminyltransferase 5 (930 aa).

Residues 1–12 are Cytoplasmic-facing; that stretch reads MNKIRKFFRGSG. Residues 13 to 35 traverse the membrane as a helical; Signal-anchor for type II membrane protein segment; the sequence is RVLAFIFVASVIWLLFDMAALRL. Residues 36–930 are Lumenal-facing; it reads SFSEINTGIL…KWKFEKYYDV (895 aa). Residues 163–210 form a disordered region; that stretch reads GSEKDSFTVSRGVPLNKTAEHTETLDKKQEAPENYNLSSDTSKQASQR. An N-linked (GlcNAc...) asparagine glycan is attached at Asn178. A compositionally biased stretch (basic and acidic residues) spans 180–193; that stretch reads TAEHTETLDKKQEA. Positions 197–210 are enriched in polar residues; sequence YNLSSDTSKQASQR. 2 N-linked (GlcNAc...) asparagine glycosylation sites follow: Asn198 and Asn213. Ser285 carries the phosphoserine modification. Residues Asn287 and Asn309 are each glycosylated (N-linked (GlcNAc...) asparagine). Positions 344 to 377 are disordered; that stretch reads LGESQGKHIPRSQSQTLSSPLAPKRAVSQSKPTL. N-linked (GlcNAc...) asparagine glycans are attached at residues Asn387 and Asn403. 3 cysteine pairs are disulfide-bonded: Cys476/Cys708, Cys699/Cys779, and Cys812/Cys825. Residues 485–594 are catalytic subdomain A; the sequence is LPTTSIIMCF…VGWLEPLLER (110 aa). Residues Asp526 and Arg555 each coordinate substrate. N-linked (GlcNAc...) asparagine glycosylation occurs at Asn568. Asp578 contributes to the Mn(2+) binding site. Position 579 (Ser579) interacts with substrate. His580 lines the Mn(2+) pocket. The interval 654–716 is catalytic subdomain B; that stretch reads IIRCPVMAGG…PCSRVGHIFR (63 aa). Residue Trp685 participates in substrate binding. His713 serves as a coordination point for Mn(2+). Substrate-binding residues include Arg716 and Tyr721. 3 N-linked (GlcNAc...) asparagine glycosylation sites follow: Asn766, Asn817, and Asn835. One can recognise a Ricin B-type lectin domain in the interval 794-925; it reads KAPVVRASGV…TEPQQKWKFE (132 aa). Cystine bridges form between Cys848–Cys863 and Cys898–Cys913. An N-linked (GlcNAc...) asparagine glycan is attached at Asn902.

It belongs to the glycosyltransferase 2 family. GalNAc-T subfamily. In terms of assembly, interacts with EXT2. Does not interact with EXT1, EXTL1 or EXTL3. The cofactor is Mn(2+). In terms of tissue distribution, predominantly expressed in sublingual gland. Expressed at lower level in stomach and small intestine. Weakly or not expressed in submandibular gland, parotid gland, kidney, liver, heart, brain, spleen, lung, skeletal muscle, testis, ovary, cervix and uterus.

The protein resides in the golgi apparatus membrane. The enzyme catalyses L-seryl-[protein] + UDP-N-acetyl-alpha-D-galactosamine = a 3-O-[N-acetyl-alpha-D-galactosaminyl]-L-seryl-[protein] + UDP + H(+). It carries out the reaction L-threonyl-[protein] + UDP-N-acetyl-alpha-D-galactosamine = a 3-O-[N-acetyl-alpha-D-galactosaminyl]-L-threonyl-[protein] + UDP + H(+). It participates in protein modification; protein glycosylation. Functionally, catalyzes the initial reaction in O-linked oligosaccharide biosynthesis, the transfer of an N-acetyl-D-galactosamine residue to a serine or threonine residue on the protein receptor. Has activity toward EA2 peptide substrate, but has a weak activity toward Muc2, Muc1b, rMuc-2 or mG-Muc substrates. In Rattus norvegicus (Rat), this protein is Polypeptide N-acetylgalactosaminyltransferase 5 (Galnt5).